Here is a 492-residue protein sequence, read N- to C-terminus: Probable glycine dehydrogenase (decarboxylating) subunit 2 (492 aa).

Lysine 274 carries the N6-(pyridoxal phosphate)lysine modification.

This sequence belongs to the GcvP family. C-terminal subunit subfamily. As to quaternary structure, the glycine cleavage system is composed of four proteins: P, T, L and H. In this organism, the P 'protein' is a heterodimer of two subunits. Pyridoxal 5'-phosphate serves as cofactor.

It catalyses the reaction N(6)-[(R)-lipoyl]-L-lysyl-[glycine-cleavage complex H protein] + glycine + H(+) = N(6)-[(R)-S(8)-aminomethyldihydrolipoyl]-L-lysyl-[glycine-cleavage complex H protein] + CO2. In terms of biological role, the glycine cleavage system catalyzes the degradation of glycine. The P protein binds the alpha-amino group of glycine through its pyridoxal phosphate cofactor; CO(2) is released and the remaining methylamine moiety is then transferred to the lipoamide cofactor of the H protein. The sequence is that of Probable glycine dehydrogenase (decarboxylating) subunit 2 from Staphylococcus haemolyticus (strain JCSC1435).